The chain runs to 135 residues: Transcriptional regulator HosA (135 aa).

The 131-residue stretch at 4-134 folds into the HTH marR-type domain; sequence RNKAFHQLRQ…FVQLVRKMMN (131 aa). The H-T-H motif DNA-binding region spans 48-71; it reads QVALIEAAVSTKATLAEMLARMEN.

Involved in the temperature-dependent positive control of flagellum-driven swimming motility and cellular aggregation. Regulates fliC expression by directly interacting with fliC promoter. The sequence is that of Transcriptional regulator HosA (hosA) from Escherichia coli O157:H7.